Consider the following 498-residue polypeptide: Glutamate--tRNA ligase (498 aa).

A 'HIGH' region motif is present at residues 12 to 22 (PSPTGHLHIGN). The 'KMSKS' region signature appears at 259-263 (KLSKR). An ATP-binding site is contributed by lysine 262.

The protein belongs to the class-I aminoacyl-tRNA synthetase family. Glutamate--tRNA ligase type 1 subfamily. Monomer.

Its subcellular location is the cytoplasm. It catalyses the reaction tRNA(Glu) + L-glutamate + ATP = L-glutamyl-tRNA(Glu) + AMP + diphosphate. Its function is as follows. Catalyzes the attachment of glutamate to tRNA(Glu) in a two-step reaction: glutamate is first activated by ATP to form Glu-AMP and then transferred to the acceptor end of tRNA(Glu). The protein is Glutamate--tRNA ligase of Limosilactobacillus fermentum (strain NBRC 3956 / LMG 18251) (Lactobacillus fermentum).